The following is a 238-amino-acid chain: Ribonuclease 3 (238 aa).

The RNase III domain occupies 11-136; sequence RARLEAAIGY…LIAAIYLDGG (126 aa). Mg(2+) is bound at residue Glu-49. The active site involves Asp-53. Mg(2+)-binding residues include Asp-122 and Glu-125. Residue Glu-125 is part of the active site. Positions 161–230 constitute a DRBM domain; that stretch reads DAKTELQEWA…AMKLLEREGV (70 aa). The span at 180–193 shows a compositional bias: basic and acidic residues; it reads YRTEDRSGPDHDPR. The disordered stretch occupies residues 180–215; it reads YRTEDRSGPDHDPRFTVTVEVDGIDPETGVDRSKRG.

This sequence belongs to the ribonuclease III family. Homodimer. Requires Mg(2+) as cofactor.

It is found in the cytoplasm. The catalysed reaction is Endonucleolytic cleavage to 5'-phosphomonoester.. In terms of biological role, digests double-stranded RNA. Involved in the processing of primary rRNA transcript to yield the immediate precursors to the large and small rRNAs (23S and 16S). Processes some mRNAs, and tRNAs when they are encoded in the rRNA operon. Processes pre-crRNA and tracrRNA of type II CRISPR loci if present in the organism. The polypeptide is Ribonuclease 3 (Sinorhizobium medicae (strain WSM419) (Ensifer medicae)).